A 289-amino-acid polypeptide reads, in one-letter code: Vesicular-fusion protein SEC17 (289 aa).

The protein belongs to the SNAP family.

Its subcellular location is the membrane. Required for vesicular transport between the endoplasmic reticulum and the Golgi apparatus. The sequence is that of Vesicular-fusion protein SEC17 (SEC17) from Coprinopsis cinerea (strain Okayama-7 / 130 / ATCC MYA-4618 / FGSC 9003) (Inky cap fungus).